The sequence spans 184 residues: Copper transporter 6 (184 aa).

Positions 1–25 (MRGMGDDGMGPMAMAPPRSGHATAA) are enriched in low complexity. Positions 1–27 (MRGMGDDGMGPMAMAPPRSGHATAAAP) are disordered. Transmembrane regions (helical) follow at residues 64 to 84 (YALC…LSVL) and 124 to 144 (MAYL…LAAV).

Belongs to the copper transporter (Ctr) (TC 1.A.56) family. SLC31A subfamily.

It is found in the membrane. Involved in the transport of copper. This chain is Copper transporter 6 (COPT6), found in Oryza sativa subsp. japonica (Rice).